The following is a 335-amino-acid chain: Biotin synthase (335 aa).

The Radical SAM core domain maps to 41–269 (KQIQVCKLIS…TSDVRLSAGR (229 aa)). Positions 56, 60, and 63 each coordinate [4Fe-4S] cluster. [2Fe-2S] cluster contacts are provided by cysteine 100, cysteine 132, cysteine 192, and arginine 264.

It belongs to the radical SAM superfamily. Biotin synthase family. As to quaternary structure, homodimer. [4Fe-4S] cluster serves as cofactor. It depends on [2Fe-2S] cluster as a cofactor.

It carries out the reaction (4R,5S)-dethiobiotin + (sulfur carrier)-SH + 2 reduced [2Fe-2S]-[ferredoxin] + 2 S-adenosyl-L-methionine = (sulfur carrier)-H + biotin + 2 5'-deoxyadenosine + 2 L-methionine + 2 oxidized [2Fe-2S]-[ferredoxin]. It participates in cofactor biosynthesis; biotin biosynthesis; biotin from 7,8-diaminononanoate: step 2/2. In terms of biological role, catalyzes the conversion of dethiobiotin (DTB) to biotin by the insertion of a sulfur atom into dethiobiotin via a radical-based mechanism. This Nostoc sp. (strain PCC 7120 / SAG 25.82 / UTEX 2576) protein is Biotin synthase.